Reading from the N-terminus, the 197-residue chain is Thymidine kinase (197 aa).

ATP is bound by residues 9–16 (SAMDAGKT) and 87–90 (DEIH). Glutamate 88 (proton acceptor) is an active-site residue. The Zn(2+) site is built by cysteine 145, cysteine 147, cysteine 187, and histidine 190.

Belongs to the thymidine kinase family. In terms of assembly, homotetramer.

The protein localises to the cytoplasm. The enzyme catalyses thymidine + ATP = dTMP + ADP + H(+). The polypeptide is Thymidine kinase (Francisella tularensis subsp. holarctica (strain LVS)).